Consider the following 155-residue polypeptide: Ribosomal RNA large subunit methyltransferase H (155 aa).

S-adenosyl-L-methionine is bound by residues Leu73, Gly104, and 123-128 (LSPLTL).

This sequence belongs to the RNA methyltransferase RlmH family. Homodimer.

The protein localises to the cytoplasm. It catalyses the reaction pseudouridine(1915) in 23S rRNA + S-adenosyl-L-methionine = N(3)-methylpseudouridine(1915) in 23S rRNA + S-adenosyl-L-homocysteine + H(+). Its function is as follows. Specifically methylates the pseudouridine at position 1915 (m3Psi1915) in 23S rRNA. The polypeptide is Ribosomal RNA large subunit methyltransferase H (Pseudomonas syringae pv. tomato (strain ATCC BAA-871 / DC3000)).